Consider the following 163-residue polypeptide: Large ribosomal subunit protein uL15 (163 aa).

Belongs to the universal ribosomal protein uL15 family. In terms of assembly, part of the 50S ribosomal subunit.

Functionally, binds to the 23S rRNA. In Orientia tsutsugamushi (strain Boryong) (Rickettsia tsutsugamushi), this protein is Large ribosomal subunit protein uL15.